A 333-amino-acid polypeptide reads, in one-letter code: GTP 3',8-cyclase (333 aa).

Residues 7–221 enclose the Radical SAM core domain; the sequence is KFGRVHDYIR…FEACNEAGYE (215 aa). R16 provides a ligand contact to GTP. Positions 23 and 27 each coordinate [4Fe-4S] cluster. Y29 is a binding site for S-adenosyl-L-methionine. C30 provides a ligand contact to [4Fe-4S] cluster. R66 lines the GTP pocket. Residue G70 coordinates S-adenosyl-L-methionine. Position 97 (T97) interacts with GTP. Position 121 (S121) interacts with S-adenosyl-L-methionine. GTP is bound at residue K158. M192 is a binding site for S-adenosyl-L-methionine. 2 residues coordinate [4Fe-4S] cluster: C257 and C260. 262-264 provides a ligand contact to GTP; it reads RLR. [4Fe-4S] cluster is bound at residue C274.

Belongs to the radical SAM superfamily. MoaA family. In terms of assembly, monomer and homodimer. It depends on [4Fe-4S] cluster as a cofactor.

It catalyses the reaction GTP + AH2 + S-adenosyl-L-methionine = (8S)-3',8-cyclo-7,8-dihydroguanosine 5'-triphosphate + 5'-deoxyadenosine + L-methionine + A + H(+). It functions in the pathway cofactor biosynthesis; molybdopterin biosynthesis. Functionally, catalyzes the cyclization of GTP to (8S)-3',8-cyclo-7,8-dihydroguanosine 5'-triphosphate. This is GTP 3',8-cyclase from Listeria monocytogenes serotype 4b (strain CLIP80459).